Reading from the N-terminus, the 147-residue chain is Hemoglobin subunit epsilon (147 aa).

The region spanning 3–147 (HFTAEEKAAI…VAIALGHKYH (145 aa)) is the Globin domain. 2 positions are modified to phosphoserine: S14 and S51. Heme b-binding residues include H64 and H93.

It belongs to the globin family. In terms of assembly, heterotetramer of two alpha chains and two epsilon chains in early embryonic hemoglobin Gower-2; two zeta chains and two epsilon chains in early embryonic hemoglobin Gower-1. In terms of tissue distribution, red blood cells.

Its function is as follows. The epsilon chain is a beta-type chain of early mammalian embryonic hemoglobin. In Callithrix jacchus (White-tufted-ear marmoset), this protein is Hemoglobin subunit epsilon (HBE1).